A 418-amino-acid polypeptide reads, in one-letter code: D-amino acid dehydrogenase (418 aa).

3–17 (VTILGAGVVGVTSAW) is a binding site for FAD.

This sequence belongs to the DadA oxidoreductase family. It depends on FAD as a cofactor.

It catalyses the reaction a D-alpha-amino acid + A + H2O = a 2-oxocarboxylate + AH2 + NH4(+). The protein operates within amino-acid degradation; D-alanine degradation; NH(3) and pyruvate from D-alanine: step 1/1. Functionally, oxidative deamination of D-amino acids. This Agrobacterium fabrum (strain C58 / ATCC 33970) (Agrobacterium tumefaciens (strain C58)) protein is D-amino acid dehydrogenase.